The sequence spans 492 residues: Catalase (492 aa).

Residues His65 and Asn138 contribute to the active site. Heme is bound at residue Tyr348.

Belongs to the catalase family. Homotetramer. Requires heme as cofactor. In terms of tissue distribution, in stems, leaves, roots and developing fruits.

The protein resides in the cytoplasm. It is found in the cytosol. The protein localises to the peroxisome matrix. It catalyses the reaction 2 H2O2 = O2 + 2 H2O. Catalyzes the degradation of hydrogen peroxide (H(2)O(2)) generated by peroxisomal oxidases to water and oxygen, thereby protecting cells from the toxic effects of hydrogen peroxide. This is Catalase (CAT) from Capsicum annuum (Capsicum pepper).